Reading from the N-terminus, the 152-residue chain is Transcriptional regulator MraZ (152 aa).

2 SpoVT-AbrB domains span residues 5–52 and 81–124; these read ATLV…PLPE and ASEC…DEQT.

Belongs to the MraZ family. Forms oligomers.

Its subcellular location is the cytoplasm. It is found in the nucleoid. In terms of biological role, negatively regulates its own expression and that of the subsequent genes in the proximal part of the division and cell wall (dcw) gene cluster. Acts by binding directly to DNA. May also regulate the expression of genes outside the dcw cluster. This chain is Transcriptional regulator MraZ, found in Pectobacterium carotovorum subsp. carotovorum (strain PC1).